A 322-amino-acid polypeptide reads, in one-letter code: Ferredoxin--NADP reductase (322 aa).

Residues T12, E31, Q39, Y44, A86, F119, and T317 each coordinate FAD.

This sequence belongs to the ferredoxin--NADP reductase type 2 family. As to quaternary structure, homodimer. The cofactor is FAD.

It carries out the reaction 2 reduced [2Fe-2S]-[ferredoxin] + NADP(+) + H(+) = 2 oxidized [2Fe-2S]-[ferredoxin] + NADPH. This chain is Ferredoxin--NADP reductase, found in Acholeplasma laidlawii (strain PG-8A).